We begin with the raw amino-acid sequence, 101 residues long: MSEKSVEAAAELSAKDLKEKKDKVEEKAGRKERKKEVVEEEENGAEEEEEETAEDGEDDDEGDEEDEEEEEEDEGPVRKRTAEEEDEADPKRQKTENGASA.

Residues 1–101 (MSEKSVEAAA…RQKTENGASA (101 aa)) are disordered. Residue S2 is modified to N-acetylserine. S2 carries the post-translational modification Phosphoserine. Residue K4 is modified to N6-acetyllysine. Residues S5 and S13 each carry the phosphoserine modification. Basic and acidic residues predominate over residues 13–37 (SAKDLKEKKDKVEEKAGRKERKKEV). K15 bears the N6-acetyllysine mark. Acidic residues predominate over residues 38–74 (VEEEENGAEEEEEETAEDGEDDDEGDEEDEEEEEEDE). At T52 the chain carries Phosphothreonine. Position 91 is an N6-acetyllysine (K91).

It belongs to the pro/parathymosin family.

Parathymosin may mediate immune function by blocking the effect of prothymosin alpha which confers resistance to certain opportunistic infections. This chain is Parathymosin (Ptms), found in Mus musculus (Mouse).